The primary structure comprises 211 residues: FMN-dependent NADH:quinone oxidoreductase (211 aa).

17–19 serves as a coordination point for FMN; sequence SYS.

Belongs to the azoreductase type 1 family. Homodimer. FMN serves as cofactor.

The enzyme catalyses 2 a quinone + NADH + H(+) = 2 a 1,4-benzosemiquinone + NAD(+). It catalyses the reaction N,N-dimethyl-1,4-phenylenediamine + anthranilate + 2 NAD(+) = 2-(4-dimethylaminophenyl)diazenylbenzoate + 2 NADH + 2 H(+). Functionally, quinone reductase that provides resistance to thiol-specific stress caused by electrophilic quinones. Also exhibits azoreductase activity. Catalyzes the reductive cleavage of the azo bond in aromatic azo compounds to the corresponding amines. In Bacillus pumilus (strain SAFR-032), this protein is FMN-dependent NADH:quinone oxidoreductase.